The primary structure comprises 825 residues: Hypoxia-inducible factor 1-alpha (825 aa).

Positions Met-1–Arg-30 are disordered. Positions Met-1–Ala-401 are interaction with TSGA10. Residues Glu-7 to Arg-30 show a composition bias toward basic and acidic residues. Residues Arg-17–Arg-70 form the bHLH domain. The DNA-binding stretch occupies residues Lys-21 to Arg-30. The 74-residue stretch at Lys-85–Gly-158 folds into the PAS 1 domain. Positions Arg-170 to Val-191 are required for heterodimer formation with ARNT. The PAS 2 domain maps to Pro-228–Gly-298. Ser-247 carries the post-translational modification Phosphoserine; by CK1. Residues Thr-302–Ile-345 form the PAC domain. Residues Ala-401–Gln-602 form an ODD region. Pro-402 is subject to 4-hydroxyproline. Residues Gln-492–Ser-516 show a composition bias toward polar residues. The interval Gln-492–Phe-520 is disordered. The interval Phe-530–Arg-574 is NTAD. Lys-531 bears the N6-acetyllysine; alternate mark. Lys-531 is covalently cross-linked (Glycyl lysine isopeptide (Lys-Gly) (interchain with G-Cter in ubiquitin); alternate). Glycyl lysine isopeptide (Lys-Gly) (interchain with G-Cter in ubiquitin) cross-links involve residues Lys-537 and Lys-546. Ser-550 is modified (phosphoserine; by GSK3-beta). The residue at position 554 (Thr-554) is a Phosphothreonine; by GSK3-beta. Pro-563 is subject to 4-hydroxyproline. Ser-575 carries the post-translational modification Phosphoserine; by PLK3. The ID stretch occupies residues Ser-575–Gln-784. 2 disordered regions span residues Leu-579–Gln-602 and Ala-654–Lys-674. Residue Ser-588 is modified to Phosphoserine; by GSK3-beta. Positions Ala-654–Ala-667 are enriched in polar residues. Ser-657 is modified (phosphoserine; by PLK3). Positions Arg-717 to Met-721 match the Nuclear localization signal motif. The tract at residues Ser-785–Asn-825 is CTAD. Cys-799 is modified (S-nitrosocysteine). Residue Asn-802 is modified to (3S)-3-hydroxyasparagine.

In terms of assembly, interacts with the ARNT; forms a heterodimer that binds core DNA sequence 5'-TACGTG-3' within the hypoxia response element (HRE) of target gene promoters. Interacts with COPS5; the interaction increases the transcriptional activity of HIF1A through increased stability. Interacts with EP300 (via TAZ-type 1 domains); the interaction is stimulated in response to hypoxia and inhibited by CITED2. Interacts with CREBBP (via TAZ-type 1 domains). Interacts with NCOA1, NCOA2, APEX1 and HSP90. Interacts (hydroxylated within the ODD domain) with VHLL (via beta domain); the interaction, leads to polyubiquitination and subsequent HIF1A proteasomal degradation. During hypoxia, sumoylated HIF1A also binds VHL; the interaction promotes the ubiquitination of HIF1A. Interacts with SENP1; the interaction desumoylates HIF1A resulting in stabilization and activation of transcription. Interacts (via the ODD domain) with NAA10; the interaction appears not to acetylate HIF1A nor have any affect on protein stability, during hypoxia. Interacts with RWDD3; the interaction enhances HIF1A sumoylation. Interacts with TSGA10. Interacts with HIF3A. Interacts with RORA (via the DNA binding domain); the interaction enhances HIF1A transcription under hypoxia through increasing protein stability. Interaction with PSMA7 inhibits the transactivation activity of HIF1A under both normoxic and hypoxia-mimicking conditions. Interacts with USP20. Interacts with RACK1; promotes HIF1A ubiquitination and proteasome-mediated degradation. Interacts (via N-terminus) with USP19. Interacts with SIRT2. Interacts (deacetylated form) with EGLN1. Interacts with CBFA2T3. Interacts with HSP90AA1 and HSP90AB1. Interacts with DCUN1D1; this interaction increases the interaction between VHL and DCUN1D1. Interacts with HIF1AN. In terms of processing, S-nitrosylation of Cys-799 may be responsible for increased recruitment of p300 coactivator necessary for transcriptional activity of HIF-1 complex. Acetylation of Lys-531 by ARD1 increases interaction with VHL and stimulates subsequent proteasomal degradation. Deacetylated by SIRT2 increases its interaction with and hydroxylation by EGLN1 thereby inactivating HIF1A activity by inducing its proteasomal degradation. Post-translationally, ubiquitinated; in normoxia, following hydroxylation and interaction with VHL. Lys-531 appears to be the principal site of ubiquitination. Clioquinol, the Cu/Zn-chelator, inhibits ubiquitination through preventing hydroxylation at Asn-802. Ubiquitinated by E3 ligase VHL. Deubiquitinated by UCHL1. In terms of processing, requires phosphorylation for DNA-binding. Phosphorylation at Ser-247 by CSNK1D/CK1 represses kinase activity and impairs ARNT binding. Phosphorylation by GSK3-beta and PLK3 promote degradation by the proteasome. The iron and 2-oxoglutarate dependent 3-hydroxylation of asparagine is (S) stereospecific within HIF CTAD domains. Post-translationally, sumoylated; with SUMO1 under hypoxia. Sumoylation is enhanced through interaction with RWDD3. Both sumoylation and desumoylation seem to be involved in the regulation of its stability during hypoxia. Sumoylation can promote either its stabilization or its VHL-dependent degradation by promoting hydroxyproline-independent HIF1A-VHL complex binding, thus leading to HIF1A ubiquitination and proteasomal degradation. Desumoylation by SENP1 increases its stability amd transcriptional activity. There is a disaccord between various publications on the effect of sumoylation and desumoylation on its stability and transcriptional activity. In terms of processing, in normoxia, is hydroxylated on Pro-402 and Pro-563 in the oxygen-dependent degradation domain (ODD) by EGLN1/PHD2 and EGLN2/PHD1. EGLN3/PHD3 has also been shown to hydroxylate Pro-563. The hydroxylated prolines promote interaction with VHL, initiating rapid ubiquitination and subsequent proteasomal degradation. Deubiquitinated by USP20. Under hypoxia, proline hydroxylation is impaired and ubiquitination is attenuated, resulting in stabilization. In normoxia, is hydroxylated on Asn-802 by HIF1AN, thus abrogating interaction with CREBBP and EP300 and preventing transcriptional activation. Repressed by iron ion, via Fe(2+) prolyl hydroxylase (PHD) enzymes-mediated hydroxylation and subsequent proteasomal degradation. As to expression, expressed in the kidney, higher expression is seen in the renal medulla than in the cortex. Expressed also in the perivenous zone of the liver.

The protein localises to the cytoplasm. Its subcellular location is the nucleus. The protein resides in the nucleus speckle. With respect to regulation, induced by reactive oxygen species (ROS). Functions as a master transcriptional regulator of the adaptive response to hypoxia. Under hypoxic conditions, activates the transcription of over 40 genes, including erythropoietin, glucose transporters, glycolytic enzymes, vascular endothelial growth factor, HILPDA, and other genes whose protein products increase oxygen delivery or facilitate metabolic adaptation to hypoxia. Plays an essential role in embryonic vascularization, tumor angiogenesis and pathophysiology of ischemic disease. Heterodimerizes with ARNT; heterodimer binds to core DNA sequence 5'-TACGTG-3' within the hypoxia response element (HRE) of target gene promoters. Activation requires recruitment of transcriptional coactivators such as CREBBP and EP300. Activity is enhanced by interaction with NCOA1 and/or NCOA2. Interaction with redox regulatory protein APEX1 seems to activate CTAD and potentiates activation by NCOA1 and CREBBP. Involved in the axonal distribution and transport of mitochondria in neurons during hypoxia. This Rattus norvegicus (Rat) protein is Hypoxia-inducible factor 1-alpha (Hif1a).